A 262-amino-acid polypeptide reads, in one-letter code: Plant intracellular Ras-group-related LRR protein 7 (262 aa).

LRR repeat units lie at residues 19–42 (WRST…VLQV), 43–66 (GNSL…VGTL), 68–89 (NMQR…IGYL), 90–112 (RNLK…LGSL), 113–135 (SNLQ…VGDL), 137–158 (NMLL…IGGC), 159–181 (SSLE…ICNL), 182–204 (VCLK…LLKD), and 206–231 (KALQ…GFTE).

Belongs to the SHOC2 family. Widely expressed and preferentially in leaf sheathes.

Functionally, leucine-rich repeat protein that likely mediates protein interactions, possibly in the context of signal transduction. This Oryza sativa subsp. japonica (Rice) protein is Plant intracellular Ras-group-related LRR protein 7 (IRL7).